The following is a 729-amino-acid chain: Glycerophosphodiester phosphodiesterase GDPDL5 (729 aa).

Residues M1–S22 form the signal peptide. GP-PDE domains follow at residues P33–I320 and I337–R645. N88, N162, N218, N227, N285, N302, N390, N401, and N507 each carry an N-linked (GlcNAc...) asparagine glycan. Residues A709–V729 traverse the membrane as a helical segment.

It belongs to the glycerophosphoryl diester phosphodiesterase family. Expressed in stems, flowers and siliques.

The protein resides in the membrane. It carries out the reaction a sn-glycero-3-phosphodiester + H2O = an alcohol + sn-glycerol 3-phosphate + H(+). The polypeptide is Glycerophosphodiester phosphodiesterase GDPDL5 (Arabidopsis thaliana (Mouse-ear cress)).